We begin with the raw amino-acid sequence, 498 residues long: UDP-N-acetylmuramoylalanine--D-glutamate ligase (498 aa).

119–125 is a binding site for ATP; sequence GTNGKST.

Belongs to the MurCDEF family.

It localises to the cytoplasm. It catalyses the reaction UDP-N-acetyl-alpha-D-muramoyl-L-alanine + D-glutamate + ATP = UDP-N-acetyl-alpha-D-muramoyl-L-alanyl-D-glutamate + ADP + phosphate + H(+). It functions in the pathway cell wall biogenesis; peptidoglycan biosynthesis. Cell wall formation. Catalyzes the addition of glutamate to the nucleotide precursor UDP-N-acetylmuramoyl-L-alanine (UMA). This Wolbachia sp. subsp. Brugia malayi (strain TRS) protein is UDP-N-acetylmuramoylalanine--D-glutamate ligase.